The sequence spans 382 residues: Galactokinase (382 aa).

Residue Glu34–Asp37 coordinates substrate. Gly124–Ser130 contacts ATP. Mg(2+)-binding residues include Ser130 and Glu162. The Proton acceptor role is filled by Asp174. Tyr223 contributes to the substrate binding site.

It belongs to the GHMP kinase family. GalK subfamily.

It is found in the cytoplasm. The catalysed reaction is alpha-D-galactose + ATP = alpha-D-galactose 1-phosphate + ADP + H(+). It participates in carbohydrate metabolism; galactose metabolism. Catalyzes the transfer of the gamma-phosphate of ATP to D-galactose to form alpha-D-galactose-1-phosphate (Gal-1-P). The polypeptide is Galactokinase (Salmonella newport (strain SL254)).